We begin with the raw amino-acid sequence, 466 residues long: Ribulose bisphosphate carboxylase large chain (466 aa).

Lys-4 carries the N6,N6,N6-trimethyllysine modification. The substrate site is built by Asn-113 and Thr-163. Lys-165 acts as the Proton acceptor in catalysis. Lys-167 lines the substrate pocket. Residues Lys-191, Asp-193, and Glu-194 each contribute to the Mg(2+) site. Position 191 is an N6-carboxylysine (Lys-191). The active-site Proton acceptor is His-284. Substrate-binding residues include Arg-285, His-317, and Ser-369.

This sequence belongs to the RuBisCO large chain family. Type I subfamily. In terms of assembly, heterohexadecamer of 8 large chains and 8 small chains; disulfide-linked. The disulfide link is formed within the large subunit homodimers. The cofactor is Mg(2+). Post-translationally, the disulfide bond which can form in the large chain dimeric partners within the hexadecamer appears to be associated with oxidative stress and protein turnover.

It localises to the plastid. The protein localises to the chloroplast. The catalysed reaction is 2 (2R)-3-phosphoglycerate + 2 H(+) = D-ribulose 1,5-bisphosphate + CO2 + H2O. It carries out the reaction D-ribulose 1,5-bisphosphate + O2 = 2-phosphoglycolate + (2R)-3-phosphoglycerate + 2 H(+). Its function is as follows. RuBisCO catalyzes two reactions: the carboxylation of D-ribulose 1,5-bisphosphate, the primary event in carbon dioxide fixation, as well as the oxidative fragmentation of the pentose substrate in the photorespiration process. Both reactions occur simultaneously and in competition at the same active site. This is Ribulose bisphosphate carboxylase large chain from Nelsonia canescens (Blue pussyleaf).